We begin with the raw amino-acid sequence, 547 residues long: Chaperonin GroEL (547 aa).

ATP-binding positions include 30 to 33 (TLGP), Lys51, 87 to 91 (DGTTT), Gly415, and Asp496. Residues 528–547 (DKSDMPAMPPGGMGGMGGMY) are disordered. Positions 538 to 547 (GGMGGMGGMY) are enriched in gly residues.

It belongs to the chaperonin (HSP60) family. As to quaternary structure, forms a cylinder of 14 subunits composed of two heptameric rings stacked back-to-back. Interacts with the co-chaperonin GroES.

The protein resides in the cytoplasm. The catalysed reaction is ATP + H2O + a folded polypeptide = ADP + phosphate + an unfolded polypeptide.. Functionally, together with its co-chaperonin GroES, plays an essential role in assisting protein folding. The GroEL-GroES system forms a nano-cage that allows encapsulation of the non-native substrate proteins and provides a physical environment optimized to promote and accelerate protein folding. In Chlorobium luteolum (strain DSM 273 / BCRC 81028 / 2530) (Pelodictyon luteolum), this protein is Chaperonin GroEL.